The chain runs to 178 residues: Interleukin-10 (178 aa).

A signal peptide spans 1–18 (MHSSALLCYLVFLAGVGA). 2 cysteine pairs are disulfide-bonded: Cys30–Cys126 and Cys80–Cys132. Asn67 is a glycosylation site (N-linked (GlcNAc...) asparagine). An N-linked (GlcNAc...) asparagine glycan is attached at Asn134.

The protein belongs to the IL-10 family. As to quaternary structure, homodimer. Interacts with IL10RA and IL10RB.

It is found in the secreted. In terms of biological role, major immune regulatory cytokine that acts on many cells of the immune system where it has profound anti-inflammatory functions, limiting excessive tissue disruption caused by inflammation. Mechanistically, IL10 binds to its heterotetrameric receptor comprising IL10RA and IL10RB leading to JAK1 and STAT2-mediated phosphorylation of STAT3. In turn, STAT3 translocates to the nucleus where it drives expression of anti-inflammatory mediators. Targets antigen-presenting cells (APCs) such as macrophages and monocytes and inhibits their release of pro-inflammatory cytokines including granulocyte-macrophage colony-stimulating factor /GM-CSF, granulocyte colony-stimulating factor/G-CSF, IL-1 alpha, IL-1 beta, IL-6, IL-8 and TNF-alpha. Also interferes with antigen presentation by reducing the expression of MHC-class II and co-stimulatory molecules, thereby inhibiting their ability to induce T cell activation. In addition, controls the inflammatory response of macrophages by reprogramming essential metabolic pathways including mTOR signaling. This chain is Interleukin-10 (IL10), found in Equus caballus (Horse).